The sequence spans 707 residues: UvrABC system protein C (707 aa).

The region spanning 14-94 (AEPGCYLMKD…IKKHRPRFNV (81 aa)) is the GIY-YIG domain. The 36-residue stretch at 206 to 241 (GELVERLRGRMAGAAEGLRFEEAARLRDQLQAVERS) folds into the UVR domain. Positions 654-684 (PDAPPAAADEPSGAPEGTPAGGPAEAIPDAA) are disordered. A compositionally biased stretch (low complexity) spans 658 to 684 (PAAADEPSGAPEGTPAGGPAEAIPDAA).

It belongs to the UvrC family. As to quaternary structure, interacts with UvrB in an incision complex.

The protein resides in the cytoplasm. The UvrABC repair system catalyzes the recognition and processing of DNA lesions. UvrC both incises the 5' and 3' sides of the lesion. The N-terminal half is responsible for the 3' incision and the C-terminal half is responsible for the 5' incision. The protein is UvrABC system protein C of Anaeromyxobacter dehalogenans (strain 2CP-C).